The sequence spans 78 residues: Protein DsvD (78 aa).

To A.fulgidus DsrD.

Functionally, may play an essential role in dissimilatory sulfite reduction. The protein is Protein DsvD (dsvD) of Nitratidesulfovibrio vulgaris (strain ATCC 29579 / DSM 644 / CCUG 34227 / NCIMB 8303 / VKM B-1760 / Hildenborough) (Desulfovibrio vulgaris).